Consider the following 396-residue polypeptide: Tryptophan synthase beta chain (396 aa).

Lys-86 carries the post-translational modification N6-(pyridoxal phosphate)lysine.

It belongs to the TrpB family. Tetramer of two alpha and two beta chains. Requires pyridoxal 5'-phosphate as cofactor.

The catalysed reaction is (1S,2R)-1-C-(indol-3-yl)glycerol 3-phosphate + L-serine = D-glyceraldehyde 3-phosphate + L-tryptophan + H2O. The protein operates within amino-acid biosynthesis; L-tryptophan biosynthesis; L-tryptophan from chorismate: step 5/5. Its function is as follows. The beta subunit is responsible for the synthesis of L-tryptophan from indole and L-serine. This Francisella tularensis subsp. holarctica (strain FTNF002-00 / FTA) protein is Tryptophan synthase beta chain.